We begin with the raw amino-acid sequence, 549 residues long: Solute carrier family 22 member 6 (549 aa).

Residues 1 to 23 lie on the Cytoplasmic side of the membrane; sequence MAFNDLLLQLGGVGRFQKIQVTL. Residues 24–44 form a helical membrane-spanning segment; it reads VILPLILLASHNTLQNFTAAI. Residues 45–135 lie on the Extracellular side of the membrane; that stretch reads PTHHCRPPAD…LVCSHRALRQ (91 aa). Asparagine 56, asparagine 92, and asparagine 113 each carry an N-linked (GlcNAc...) asparagine glycan. The helical transmembrane segment at 136 to 156 threads the bilayer; that stretch reads LAQSLYMMGVLLGAMTFGCLA. The Cytoplasmic segment spans residues 157 to 164; it reads DRLGRRKV. The helical transmembrane segment at 165-185 threads the bilayer; it reads LIFNYLQTAVSGTCAAFAPNF. Topologically, residues 186-195 are extracellular; it reads PAYCAFRFLS. The helical transmembrane segment at 196–216 threads the bilayer; that stretch reads GMSTAGVVLNCMTLNVEWMPI. Over 217–224 the chain is Cytoplasmic; sequence HTRAYVGT. The chain crosses the membrane as a helical span at residues 225-245; that stretch reads LTGYVYSLGQFLLAGMAYAVP. Topologically, residues 246 to 248 are extracellular; sequence HWR. The helical transmembrane segment at 249–269 threads the bilayer; it reads YLQLLVSAPFFAFFIYSWFFI. The Cytoplasmic segment spans residues 270 to 337; the sequence is ESARWYASSG…ELIRCPALRR (68 aa). A helical transmembrane segment spans residues 338–358; it reads LFLCLSMLWFATSFAYYGLVM. At 359–368 the chain is on the extracellular side; it reads DLQGFGVSIY. A helical transmembrane segment spans residues 369-389; sequence LIQVIFGAVDLPAKLVSFLVI. Residues 390–395 are Cytoplasmic-facing; the sequence is NNVGRR. The chain crosses the membrane as a helical span at residues 396 to 416; it reads PAQMASLLLAGICILINGVVP. Over 417 to 425 the chain is Extracellular; the sequence is KDKSIVRTS. The helical transmembrane segment at 426–446 threads the bilayer; the sequence is LAVLGKGCLASSFNCIFLYTG. Residues 447–456 lie on the Cytoplasmic side of the membrane; the sequence is EVYPTMIRQT. The helical transmembrane segment at 457–477 threads the bilayer; that stretch reads GLGMGSTLARVGSIVSPLVSM. Residues 478–484 lie on the Extracellular side of the membrane; the sequence is TAELYPS. Residues 485–505 form a helical membrane-spanning segment; sequence VPLFIYGAVPVAASAAIALLP. Over 506-549 the chain is Cytoplasmic; the sequence is ETLGQPLPDTVQDVENRRRGKTRKQQEELQKQMVPLQASAQVKN. Residues 521 to 549 form a disordered region; sequence NRRRGKTRKQQEELQKQMVPLQASAQVKN.

The protein belongs to the major facilitator (TC 2.A.1) superfamily. Organic cation transporter (TC 2.A.1.19) family. In terms of processing, glycosylated. Glycosylation is necessary for proper targeting of the transporter to the plasma membrane.

Its subcellular location is the basolateral cell membrane. It is found in the basal cell membrane. The enzyme catalyses (6R)-L-erythro-5,6,7,8-tetrahydrobiopterin(out) + a dicarboxylate(in) = (6R)-L-erythro-5,6,7,8-tetrahydrobiopterin(in) + a dicarboxylate(out). It catalyses the reaction L-erythro-7,8-dihydrobiopterin(out) + a dicarboxylate(in) = L-erythro-7,8-dihydrobiopterin(in) + a dicarboxylate(out). The catalysed reaction is L-sepiapterin(out) + a dicarboxylate(in) = L-sepiapterin(in) + a dicarboxylate(out). It carries out the reaction prostaglandin F2alpha(out) + a dicarboxylate(in) = prostaglandin F2alpha(in) + a dicarboxylate(out). The enzyme catalyses prostaglandin E2(out) + a dicarboxylate(in) = prostaglandin E2(in) + a dicarboxylate(out). It catalyses the reaction 3',5'-cyclic AMP(out) + a dicarboxylate(in) = 3',5'-cyclic AMP(in) + a dicarboxylate(out). The catalysed reaction is 3',5'-cyclic GMP(out) + a dicarboxylate(in) = 3',5'-cyclic GMP(in) + a dicarboxylate(out). It carries out the reaction urate(out) + a dicarboxylate(in) = urate(in) + a dicarboxylate(out). The enzyme catalyses kynurenate(out) + glutarate(in) = kynurenate(in) + glutarate(out). It catalyses the reaction (indol-3-yl)acetate(out) + a dicarboxylate(in) = (indol-3-yl)acetate(in) + a dicarboxylate(out). The catalysed reaction is indoxyl sulfate(out) + a dicarboxylate(in) = indoxyl sulfate(in) + a dicarboxylate(out). It carries out the reaction N-benzoylglycine(out) + a dicarboxylate(in) = N-benzoylglycine(in) + a dicarboxylate(out). The enzyme catalyses 3-carboxy-4-methyl-5-propyl-2-furanpropanoate(out) + a dicarboxylate(in) = 3-carboxy-4-methyl-5-propyl-2-furanpropanoate(in) + a dicarboxylate(out). In terms of biological role, secondary active transporter that functions as a Na(+)-independent organic anion (OA)/dicarboxylate antiporter where the uptake of one molecule of OA into the cell is coupled with an efflux of one molecule of intracellular dicarboxylate such as 2-oxoglutarate or glutarate. Mediates the uptake of OA across the basolateral side of proximal tubule epithelial cells, thereby contributing to the renal elimination of endogenous OA from the systemic circulation into the urine. Functions as a biopterin transporters involved in the uptake and the secretion of coenzymes tetrahydrobiopterin (BH4), dihydrobiopterin (BH2) and sepiapterin to urine, thereby determining baseline levels of blood biopterins. Transports prostaglandin E2 (PGE2) and prostaglandin F2-alpha (PGF2-alpha) and may contribute to their renal excretion. Also mediates the uptake of cyclic nucleotides such as cAMP and cGMP. Involved in the transport of neuroactive tryptophan metabolites kynurenate (KYNA) and xanthurenate (XA) and may contribute to their secretion from the brain. May transport glutamate. Also involved in the disposition of uremic toxins and potentially toxic xenobiotics by the renal organic anion secretory pathway, helping reduce their undesired toxicological effects on the body. Uremic toxins include the indoxyl sulfate (IS), hippurate/N-benzoylglycine (HA), indole acetate (IA), 3-carboxy-4- methyl-5-propyl-2-furanpropionate (CMPF) and urate. Xenobiotics include the mycotoxin ochratoxin (OTA). May also contribute to the transport of organic compounds in testes across the blood-testis-barrier. The sequence is that of Solute carrier family 22 member 6 from Bos taurus (Bovine).